A 648-amino-acid polypeptide reads, in one-letter code: 1-deoxy-D-xylulose-5-phosphate synthase 1 (648 aa).

Residues His82 and 123 to 125 each bind thiamine diphosphate; that span reads AHS. Asp154 provides a ligand contact to Mg(2+). Thiamine diphosphate contacts are provided by residues 155 to 156, Asn183, Tyr292, and Glu374; that span reads GS. Asn183 provides a ligand contact to Mg(2+).

Belongs to the transketolase family. DXPS subfamily. In terms of assembly, homodimer. Mg(2+) serves as cofactor. Thiamine diphosphate is required as a cofactor.

The catalysed reaction is D-glyceraldehyde 3-phosphate + pyruvate + H(+) = 1-deoxy-D-xylulose 5-phosphate + CO2. Its pathway is metabolic intermediate biosynthesis; 1-deoxy-D-xylulose 5-phosphate biosynthesis; 1-deoxy-D-xylulose 5-phosphate from D-glyceraldehyde 3-phosphate and pyruvate: step 1/1. In terms of biological role, catalyzes the acyloin condensation reaction between C atoms 2 and 3 of pyruvate and glyceraldehyde 3-phosphate to yield 1-deoxy-D-xylulose-5-phosphate (DXP). In Cereibacter sphaeroides (strain ATCC 17023 / DSM 158 / JCM 6121 / CCUG 31486 / LMG 2827 / NBRC 12203 / NCIMB 8253 / ATH 2.4.1.) (Rhodobacter sphaeroides), this protein is 1-deoxy-D-xylulose-5-phosphate synthase 1.